The following is a 204-amino-acid chain: Probable nicotinate-nucleotide adenylyltransferase (204 aa).

It belongs to the NadD family.

The catalysed reaction is nicotinate beta-D-ribonucleotide + ATP + H(+) = deamido-NAD(+) + diphosphate. It functions in the pathway cofactor biosynthesis; NAD(+) biosynthesis; deamido-NAD(+) from nicotinate D-ribonucleotide: step 1/1. Functionally, catalyzes the reversible adenylation of nicotinate mononucleotide (NaMN) to nicotinic acid adenine dinucleotide (NaAD). The chain is Probable nicotinate-nucleotide adenylyltransferase from Methylacidiphilum infernorum (isolate V4) (Methylokorus infernorum (strain V4)).